We begin with the raw amino-acid sequence, 100 residues long: Putative antiporter subunit mnhF2 (100 aa).

3 helical membrane passes run 5 to 25 (FTQIFIISALVIFGMALLVCL), 38 to 60 (VVSFDASSAVVMSIVGVMSVIFN), and 65 to 87 (LDSIMLIAIISFVSSVSISRFIG).

This sequence belongs to the CPA3 antiporters (TC 2.A.63) subunit F family. In terms of assembly, may form a heterooligomeric complex that consists of seven subunits: mnhA2, mnhB2, mnhC2, mnhD2, mnhE2, mnhF2 and mnhG2.

The protein localises to the cell membrane. The chain is Putative antiporter subunit mnhF2 (mnhF2) from Staphylococcus epidermidis (strain ATCC 35984 / DSM 28319 / BCRC 17069 / CCUG 31568 / BM 3577 / RP62A).